Reading from the N-terminus, the 273-residue chain is Large ribosomal subunit protein uL2c (273 aa).

Polar residues predominate over residues 1–31 (MAIHLSKTSSPSTRNGAVNSQVKSNSRNRLI). Disordered regions lie at residues 1-53 (MAIH…GHRG) and 222-273 (MNPV…RRSK).

The protein belongs to the universal ribosomal protein uL2 family. In terms of assembly, part of the 50S ribosomal subunit.

It localises to the plastid. Its subcellular location is the chloroplast. This is Large ribosomal subunit protein uL2c (rpl2) from Pisum sativum (Garden pea).